Consider the following 911-residue polypeptide: Protein translocase subunit SecA (911 aa).

ATP is bound by residues Gln-90, 108–112 (GEGKT), and Asp-515. Residues Cys-891, Cys-893, Cys-902, and His-903 each coordinate Zn(2+).

This sequence belongs to the SecA family. In terms of assembly, monomer and homodimer. Part of the essential Sec protein translocation apparatus which comprises SecA, SecYEG and auxiliary proteins SecDF-YajC and YidC. Zn(2+) serves as cofactor.

It localises to the cell inner membrane. It is found in the cytoplasm. The enzyme catalyses ATP + H2O + cellular proteinSide 1 = ADP + phosphate + cellular proteinSide 2.. Its function is as follows. Part of the Sec protein translocase complex. Interacts with the SecYEG preprotein conducting channel. Has a central role in coupling the hydrolysis of ATP to the transfer of proteins into and across the cell membrane, serving both as a receptor for the preprotein-SecB complex and as an ATP-driven molecular motor driving the stepwise translocation of polypeptide chains across the membrane. This chain is Protein translocase subunit SecA, found in Blochmanniella pennsylvanica (strain BPEN).